The following is a 199-amino-acid chain: Large ribosomal subunit protein bL25 (199 aa).

The protein belongs to the bacterial ribosomal protein bL25 family. CTC subfamily. As to quaternary structure, part of the 50S ribosomal subunit; part of the 5S rRNA/L5/L18/L25 subcomplex. Contacts the 5S rRNA. Binds to the 5S rRNA independently of L5 and L18.

In terms of biological role, this is one of the proteins that binds to the 5S RNA in the ribosome where it forms part of the central protuberance. The protein is Large ribosomal subunit protein bL25 of Chloroherpeton thalassium (strain ATCC 35110 / GB-78).